The following is a 309-amino-acid chain: Movement protein (309 aa).

The interval 245-273 (HLSLNESKTLPSTSTTEAEGSERRIHIGA) is disordered. Over residues 246–262 (LSLNESKTLPSTSTTEA) the composition is skewed to polar residues.

The protein resides in the host cell junction. It is found in the host plasmodesma. In terms of biological role, transports viral genome to neighboring plant cells directly through plasmosdesmata, without any budding. The movement protein allows efficient cell to cell propagation, by bypassing the host cell wall barrier. Acts by forming a tubular structure at the host plasmodesmata, enlarging it enough to allow free passage of virion capsids. The protein is Movement protein of Solanum lycopersicum (Tomato).